Here is a 316-residue protein sequence, read N- to C-terminus: DNA-directed RNA polymerase subunit alpha (316 aa).

The tract at residues 1–230 (MIEFEKPNIH…EHLAMFVDLT (230 aa)) is alpha N-terminal domain (alpha-NTD). The tract at residues 247–316 (KEKMLEMTIE…DLGLSLRKED (70 aa)) is alpha C-terminal domain (alpha-CTD).

It belongs to the RNA polymerase alpha chain family. Homodimer. The RNAP catalytic core consists of 2 alpha, 1 beta, 1 beta' and 1 omega subunit. When a sigma factor is associated with the core the holoenzyme is formed, which can initiate transcription.

The catalysed reaction is RNA(n) + a ribonucleoside 5'-triphosphate = RNA(n+1) + diphosphate. DNA-dependent RNA polymerase catalyzes the transcription of DNA into RNA using the four ribonucleoside triphosphates as substrates. The chain is DNA-directed RNA polymerase subunit alpha from Levilactobacillus brevis (strain ATCC 367 / BCRC 12310 / CIP 105137 / JCM 1170 / LMG 11437 / NCIMB 947 / NCTC 947) (Lactobacillus brevis).